Here is a 117-residue protein sequence, read N- to C-terminus: MRTLLIRYILWRNDNDQTYYNDNFKKLMLLDELVDDGDVCTLIKNMRMTLSDGPLLDRLNQPVNNIEDAKRMIAISAKVARDIGERSEIRWEESFTILFRMIETYFDDLMIDLYGEK.

The protein belongs to the poxviridae OPG035 family.

Its function is as follows. Bcl-2-like protein which contributes to virulence by preventing host NF-kappa-B activation in response to pro-inflammatory stimuli such as TNF-alpha or IL1B. The chain is Protein OPG035 (OPG035) from Bos taurus (Bovine).